The following is a 147-amino-acid chain: Transcriptional repressor NrdR (147 aa).

A zinc finger lies at 3–34 (CPFCGHLETQVVETRVSEDADFVRRRRQCSAC). The 91-residue stretch at 49 to 139 (PVVVKKDGSR…VYRSFEDVDE (91 aa)) folds into the ATP-cone domain.

The protein belongs to the NrdR family. It depends on Zn(2+) as a cofactor.

Functionally, negatively regulates transcription of bacterial ribonucleotide reductase nrd genes and operons by binding to NrdR-boxes. The chain is Transcriptional repressor NrdR from Variovorax paradoxus (strain S110).